Reading from the N-terminus, the 660-residue chain is MPINEIRVQKGQRYRDAINDKKVIAVKKGDKFLDLDEIAGEDEAVQPVYLDSEDGLYILRHSAAHLLANAVTNLFPEALPNTGPVVENGFYYDFDMKPITEEDLSKIEEEMKRIVKENVPIRRMIYSKDELLKIFSKNPYKIRIINENVEGKSSVYQQGNFVDLCLGPHVPSTGYIKAFKLLSIASAVYKYDESKNLVRIYGTAFPDEKSLRRYLENLEEAKKRDHRKIIAEMDLAVFNSEWAPGFPMYTPNGQIIRKELIKYMDYVNGKNGWTDVWTPHVFKDTIWKQSGHYAKYKPNMYLFVLPDGDSYGIKPMNCPGHIAIFARRKYSYRDLPVKYSEPGTVYRYEKSGEVGGLTRPRAFTQDDGHEFIRMDQIVGEIKTLLGMVRETFTTVFGNIEMAFDLSVIDKEHPENYLLSYVCKDCGNRVEGLRGTDIECPVCHSHNMDPDFSTWDNATEQLRQAMDSMGITYKEYPGEAAFYGPKIDVHVKDALGRMWQLSTIQVDFFMPINFGLTYTNSEGKEERVVIIHRAIYGSYERFMAILLEHFAGKLPTWLTPIQTYVIPVGTANAEYARKVNKSLLDAGIRSVVDDGPDTVSKKIKMIHDQRPSYIVVVGAKEEQDNTVTVRNRAGKSKTYGMNEFLEIIKNEIEKRSVGQAF.

Positions 1–49 (MPINEIRVQKGQRYRDAINDKKVIAVKKGDKFLDLDEIAGEDEAVQPVY) constitute a TGS domain. Residues 225 to 554 (DHRKIIAEMD…LLEHFAGKLP (330 aa)) form a catalytic region. Zn(2+) is bound by residues C318, H369, and H531.

The protein belongs to the class-II aminoacyl-tRNA synthetase family. In terms of assembly, homodimer. Zn(2+) is required as a cofactor.

The protein localises to the cytoplasm. The enzyme catalyses tRNA(Thr) + L-threonine + ATP = L-threonyl-tRNA(Thr) + AMP + diphosphate + H(+). In terms of biological role, catalyzes the attachment of threonine to tRNA(Thr) in a two-step reaction: L-threonine is first activated by ATP to form Thr-AMP and then transferred to the acceptor end of tRNA(Thr). The polypeptide is Threonine--tRNA ligase (Thermoplasma volcanium (strain ATCC 51530 / DSM 4299 / JCM 9571 / NBRC 15438 / GSS1)).